A 223-amino-acid chain; its full sequence is DNA mismatch repair protein MutH (223 aa).

This sequence belongs to the MutH family.

It is found in the cytoplasm. Its function is as follows. Sequence-specific endonuclease that cleaves unmethylated GATC sequences. It is involved in DNA mismatch repair. This is DNA mismatch repair protein MutH from Shewanella oneidensis (strain ATCC 700550 / JCM 31522 / CIP 106686 / LMG 19005 / NCIMB 14063 / MR-1).